A 610-amino-acid chain; its full sequence is Zinc metalloproteinase-disintegrin-like brevilysin H6 (610 aa).

An N-terminal signal peptide occupies residues 1–20; the sequence is MIQVLLVTICLAAFPYQGSS. Residues 21–191 constitute a propeptide that is removed on maturation; that stretch reads IILESGNVND…ASQLNLTPEQ (171 aa). Q192 carries the post-translational modification Pyrrolidone carboxylic acid. The region spanning 198-394 is the Peptidase M12B domain; sequence RFVELVLVAD…HNPECIVNEP (197 aa). The Ca(2+) site is built by E201 and D285. 4 cysteine pairs are disulfide-bonded: C309–C389, C349–C373, C351–C356, and C373–C378. H334 lines the Zn(2+) pocket. The active site involves E335. Residues H338 and H344 each coordinate Zn(2+). N372 carries N-linked (GlcNAc...) asparagine glycosylation. Ca(2+) contacts are provided by C389, N392, V404, N407, L409, E411, E414, and D417. The region spanning 402-488 is the Disintegrin domain; that stretch reads PPVCGNELLE…ECPADVFHKN (87 aa). Disulfide bonds link C405–C424, C405–C434, C416–C429, C416–C434, C418–C424, C428–C451, C442–C448, C447–C473, C460–C480, C467–C492, C467–C499, C492–C504, C499–C504, C511–C526, C511–C561, C526–C572, C539–C549, C549–C556, C556–C598, C561–C572, C592–C603, and C598–C603. Positions 466-468 match the D/ECD-tripeptide motif; the sequence is ECD. Positions 468, 469, 471, 483, and 484 each coordinate Ca(2+).

It belongs to the venom metalloproteinase (M12B) family. P-III subfamily. P-IIIb sub-subfamily. As to quaternary structure, monomer. The cofactor is Zn(2+). Post-translationally, in the absence of calcium ions, is autocatalytically degraded giving 29 (p29K) and 45 kDa (p45K) fragments. In presence of calcium ions, the p45K is not detected. As to expression, expressed by the venom gland.

Its subcellular location is the secreted. Its activity is regulated as follows. Inhibited by chelating agents. Calcium ions enhance its activity, they also suppress autoproteolysis, and contribute to the stability of the enzyme against pH, heating, urea and cysteine. Shows weak hemorrhagic activity. Rapidly degrades the alpha-chain of fibrinogen (FGA). The chain is Zinc metalloproteinase-disintegrin-like brevilysin H6 from Gloydius brevicauda (Korean slamosa snake).